Consider the following 285-residue polypeptide: HTH-type transcriptional regulator MurR (285 aa).

Residues 1-77 (MLYLTKIRNA…MALIGEYSAS (77 aa)) enclose the HTH rpiR-type domain. A DNA-binding region (H-T-H motif) is located at residues 37-56 (SRKMAKQLGISQSSIVKFAQ). Residues 128–268 (IIEVISKAPF…FVGLVQLNDV (141 aa)) enclose the SIS domain.

Homotetramer.

It functions in the pathway amino-sugar metabolism; N-acetylmuramate degradation [regulation]. Its function is as follows. Represses the expression of the murPQ operon involved in the uptake and degradation of N-acetylmuramic acid (MurNAc). Binds to two adjacent inverted repeats within the operator region. MurNAc 6-phosphate, the substrate of MurQ, is the specific inducer that weakens binding of MurR to the operator. The protein is HTH-type transcriptional regulator MurR of Escherichia coli O157:H7.